The following is a 339-amino-acid chain: Protein pelota homolog (339 aa).

It belongs to the eukaryotic release factor 1 family. Pelota subfamily. As to quaternary structure, monomer. A divalent metal cation serves as cofactor.

The protein resides in the cytoplasm. Functionally, may function in recognizing stalled ribosomes, interact with stem-loop structures in stalled mRNA molecules, and effect endonucleolytic cleavage of the mRNA. May play a role in the release non-functional ribosomes and degradation of damaged mRNAs. Has endoribonuclease activity. In Picrophilus torridus (strain ATCC 700027 / DSM 9790 / JCM 10055 / NBRC 100828 / KAW 2/3), this protein is Protein pelota homolog.